The following is a 263-amino-acid chain: Probable cyclic nucleotide phosphodiesterase CPS_4178 (263 aa).

Aspartate 21, histidine 23, aspartate 62, asparagine 94, histidine 160, histidine 198, and histidine 200 together coordinate Fe cation. Residues histidine 23, aspartate 62, and 94–95 (NH) contribute to the AMP site. Position 200 (histidine 200) interacts with AMP.

Belongs to the cyclic nucleotide phosphodiesterase class-III family. It depends on Fe(2+) as a cofactor.

The chain is Probable cyclic nucleotide phosphodiesterase CPS_4178 from Colwellia psychrerythraea (strain 34H / ATCC BAA-681) (Vibrio psychroerythus).